Here is a 337-residue protein sequence, read N- to C-terminus: MQIVDQMRDQAFEELNLVNDKKSLDDIRVKYLGKKGELTGMMRLIATLPNEEKPKLGQAVNIAKEALQNAINEKLAKFEEAELNEKLASEKIDVTLKGVGQNQGSLHPVTKTLNRIEAFFKQNGFAVEVGPEIESDYYNFETLNIPSHHPARAMHDTFYIDDTHVLRTHTSGVQIRTMEKQQPPIRIIAPGRVYRCDSDITHTPMFHQVEGLLVDKDVSFADLKGLLHAFLNSFFEKDLKVRFRPSYFPFTEPSAEADMECVMCDGKGCRVCKHTGWLEVLGCGMVHPKVLKAGNIDSENYQGFAFGMGVERLSMLRYGIDDLRMFFENDLRFLKQF.

Position 252 (glutamate 252) interacts with Mg(2+).

The protein belongs to the class-II aminoacyl-tRNA synthetase family. Phe-tRNA synthetase alpha subunit type 1 subfamily. Tetramer of two alpha and two beta subunits. It depends on Mg(2+) as a cofactor.

The protein resides in the cytoplasm. The enzyme catalyses tRNA(Phe) + L-phenylalanine + ATP = L-phenylalanyl-tRNA(Phe) + AMP + diphosphate + H(+). The polypeptide is Phenylalanine--tRNA ligase alpha subunit (Francisella philomiragia subsp. philomiragia (strain ATCC 25017 / CCUG 19701 / FSC 153 / O#319-036)).